Consider the following 214-residue polypeptide: Pyridoxine/pyridoxamine 5'-phosphate oxidase (214 aa).

Substrate contacts are provided by residues 8–11 (RINY) and Lys66. FMN-binding positions include 61 to 66 (RIVLIK), 76 to 77 (FT), Arg82, Lys83, and Gln105. Residues Tyr123, Arg127, and Ser131 each contribute to the substrate site. FMN is bound by residues 140-141 (QS) and Trp184. A substrate-binding site is contributed by 190–192 (RLH). Residue Arg194 coordinates FMN.

It belongs to the pyridoxamine 5'-phosphate oxidase family. As to quaternary structure, homodimer. FMN serves as cofactor.

The catalysed reaction is pyridoxamine 5'-phosphate + O2 + H2O = pyridoxal 5'-phosphate + H2O2 + NH4(+). It carries out the reaction pyridoxine 5'-phosphate + O2 = pyridoxal 5'-phosphate + H2O2. The protein operates within cofactor metabolism; pyridoxal 5'-phosphate salvage; pyridoxal 5'-phosphate from pyridoxamine 5'-phosphate: step 1/1. Its pathway is cofactor metabolism; pyridoxal 5'-phosphate salvage; pyridoxal 5'-phosphate from pyridoxine 5'-phosphate: step 1/1. Its function is as follows. Catalyzes the oxidation of either pyridoxine 5'-phosphate (PNP) or pyridoxamine 5'-phosphate (PMP) into pyridoxal 5'-phosphate (PLP). This Burkholderia orbicola (strain MC0-3) protein is Pyridoxine/pyridoxamine 5'-phosphate oxidase.